An 866-amino-acid chain; its full sequence is Translation initiation factor IF-2 (866 aa).

Disordered regions lie at residues 1-63 (MTND…AAVQ) and 92-257 (VVRA…RGRS). Residues 26 to 36 (ETGQVRQSFSH) show a composition bias toward polar residues. Residues 92-135 (VVRAAEEAERKRLEEIERRRREEEEARLKVEEEARRKAEEEAAR) show a composition bias toward basic and acidic residues. Composition is skewed to low complexity over residues 152 to 164 (VAPA…AAPQ) and 179 to 197 (PDAS…TEAP). The tr-type G domain maps to 365-533 (SRPPVVTVMG…AILLQSEILD (169 aa)). Residues 374-381 (GHVDHGKT) are G1. GTP is bound at residue 374-381 (GHVDHGKT). A G2 region spans residues 399–403 (GITQH). Residues 421–424 (DTPG) are G3. Residues 421 to 425 (DTPGH) and 475 to 478 (NKMD) contribute to the GTP site. The G4 stretch occupies residues 475–478 (NKMD). The segment at 511–513 (SAK) is G5.

The protein belongs to the TRAFAC class translation factor GTPase superfamily. Classic translation factor GTPase family. IF-2 subfamily.

It localises to the cytoplasm. One of the essential components for the initiation of protein synthesis. Protects formylmethionyl-tRNA from spontaneous hydrolysis and promotes its binding to the 30S ribosomal subunits. Also involved in the hydrolysis of GTP during the formation of the 70S ribosomal complex. The polypeptide is Translation initiation factor IF-2 (Rhodospirillum rubrum (strain ATCC 11170 / ATH 1.1.1 / DSM 467 / LMG 4362 / NCIMB 8255 / S1)).